The following is a 175-amino-acid chain: ADP-ribosylation factor 6 (175 aa).

G2 carries N-myristoyl glycine lipidation. A lipid anchor (N6-myristoyl lysine) is attached at K3. Residues 23 to 28 (AAGKTT), 41 to 44 (TIPT), 63 to 67 (DVGGQ), 122 to 125 (NKQD), and 155 to 156 (CA) each bind GTP.

Belongs to the small GTPase superfamily. Arf family. Interacts (when activated) with GGA1, GGA2 and GGA3; the interaction is required for proper subcellular location of GGA1, GGA2 and GGA3. Interacts with PIP5K1C. Interacts with USP6 (via Rab-GAP TBC domain). Interacts with RAB11FIP3 and RAB11FIP4. Interacts with HERC1. Interacts with ARHGAP21. Interacts with ASAP3; the interaction is stabilized by calcium ions. Interacts with NCS1/FREQ at the plasma membrane. Interacts with TBC1D24. Interacts with ECPAS. Interacts with MICALL1. Interacts with SPAG9 homodimers, forming heterotetramers. Interacts with CYTH3. Interacts with ASAP2. Interacts with UACA. Interacts with KIF23, forming heterodimers and heterotetramers. Interacts with C9orf72. Interacts (GTP-bound form) with TJAP1/PILT. Interacts with PRKAA2. Interacts with CD36 (when palmitoylated); this interaction mediates CD36 transport from the Golgi to the plasma membrane. Interacts with APBB1. In terms of assembly, (Microbial infection) Interacts with the V.cholerae enterotoxin subunit A1; this causes a conformation change so that the toxin can bind NAD and catalyze the ADP-ribosylation of Gs alpha. As to quaternary structure, (Microbial infection) Interacts with EspG from enteropathogenic E.coli. (Microbial infection) Identified in a complex with RAB1A and EspG from enteropathogenic E.coli. In terms of assembly, (Microbial infection) Interacts with human enterovirus 71 protein VP1. Post-translationally, GTP-bound form is myristoylated on Lys-3 by NMT1 and NMT2, allowing ARF6 to remain on membranes during the GTPase cycle, thereby promoting its activity. GDP-bound inactive form is demyristoylated on Lys-3 by SIRT2 at early endosomes or endocytic recycling compartment to allow its efficient activation by a guanine exchange factor (GEF) after GDP release. Ubiquitous, with higher levels in heart, substantia nigra, and kidney.

It is found in the cytoplasm. Its subcellular location is the cytosol. The protein localises to the cell membrane. The protein resides in the endosome membrane. It localises to the recycling endosome membrane. It is found in the cell projection. Its subcellular location is the filopodium membrane. The protein localises to the ruffle. The protein resides in the cleavage furrow. It localises to the midbody. It is found in the midbody ring. Its subcellular location is the early endosome membrane. The protein localises to the golgi apparatus. The protein resides in the trans-Golgi network membrane. The catalysed reaction is GTP + H2O = GDP + phosphate + H(+). Activation is generally mediated by a guanine exchange factor (GEF), while inactivation through hydrolysis of bound GTP is catalyzed by a GTPase activating protein (GAP). Activated by ASAP3. Inactivated by ACAP1 and ACAP2. Activated by NGF via NTRK1. Activated by PRKAA2 through its C-terminal regulatory domain. In terms of biological role, GTP-binding protein involved in protein trafficking that regulates endocytic recycling and cytoskeleton remodeling. GTP-bound form plays an important role in the transport of multiple palmitoylated proteins form the Golgi to the plasma membrane. Required for normal completion of mitotic cytokinesis. Plays a role in the reorganization of the actin cytoskeleton and the formation of stress fibers. Involved in the regulation of dendritic spine development, contributing to the regulation of dendritic branching and filopodia extension. Potentiates the neurite outgrowth in primary neurons by interacting with the molecular adapter APBB1. Plays an important role in membrane trafficking, during junctional remodeling and epithelial polarization. Regulates surface levels of adherens junction proteins such as CDH1. Required for NTRK1 sorting to the recycling pathway from early endosomes. (Microbial infection) Functions as an allosteric activator of the cholera toxin catalytic subunit, an ADP-ribosyltransferase. Functionally, (Microbial infection) Plays a key role in the endocytosis of enterovirus 71 and thus viral entry into brain microvascular endothelial cells. The chain is ADP-ribosylation factor 6 from Homo sapiens (Human).